We begin with the raw amino-acid sequence, 230 residues long: Large ribosomal subunit protein uL1 (230 aa).

Belongs to the universal ribosomal protein uL1 family. As to quaternary structure, part of the 50S ribosomal subunit.

In terms of biological role, binds directly to 23S rRNA. The L1 stalk is quite mobile in the ribosome, and is involved in E site tRNA release. Protein L1 is also a translational repressor protein, it controls the translation of the L11 operon by binding to its mRNA. The sequence is that of Large ribosomal subunit protein uL1 from Bifidobacterium longum (strain DJO10A).